The sequence spans 571 residues: Proline--tRNA ligase (571 aa).

Belongs to the class-II aminoacyl-tRNA synthetase family. ProS type 1 subfamily. In terms of assembly, homodimer.

Its subcellular location is the cytoplasm. The enzyme catalyses tRNA(Pro) + L-proline + ATP = L-prolyl-tRNA(Pro) + AMP + diphosphate. Catalyzes the attachment of proline to tRNA(Pro) in a two-step reaction: proline is first activated by ATP to form Pro-AMP and then transferred to the acceptor end of tRNA(Pro). As ProRS can inadvertently accommodate and process non-cognate amino acids such as alanine and cysteine, to avoid such errors it has two additional distinct editing activities against alanine. One activity is designated as 'pretransfer' editing and involves the tRNA(Pro)-independent hydrolysis of activated Ala-AMP. The other activity is designated 'posttransfer' editing and involves deacylation of mischarged Ala-tRNA(Pro). The misacylated Cys-tRNA(Pro) is not edited by ProRS. The polypeptide is Proline--tRNA ligase (Vibrio vulnificus (strain YJ016)).